The sequence spans 385 residues: Probable tRNA sulfurtransferase (385 aa).

Positions 57–160 (DGVIERVKKV…RGNAYVFTDK (104 aa)) constitute a THUMP domain. ATP is bound by residues 180–181 (ML), 205–206 (YY), R262, G284, and Q293.

It belongs to the ThiI family.

The protein localises to the cytoplasm. It carries out the reaction [ThiI sulfur-carrier protein]-S-sulfanyl-L-cysteine + a uridine in tRNA + 2 reduced [2Fe-2S]-[ferredoxin] + ATP + H(+) = [ThiI sulfur-carrier protein]-L-cysteine + a 4-thiouridine in tRNA + 2 oxidized [2Fe-2S]-[ferredoxin] + AMP + diphosphate. It catalyses the reaction [ThiS sulfur-carrier protein]-C-terminal Gly-Gly-AMP + S-sulfanyl-L-cysteinyl-[cysteine desulfurase] + AH2 = [ThiS sulfur-carrier protein]-C-terminal-Gly-aminoethanethioate + L-cysteinyl-[cysteine desulfurase] + A + AMP + 2 H(+). The protein operates within cofactor biosynthesis; thiamine diphosphate biosynthesis. Functionally, catalyzes the ATP-dependent transfer of a sulfur to tRNA to produce 4-thiouridine in position 8 of tRNAs, which functions as a near-UV photosensor. Also catalyzes the transfer of sulfur to the sulfur carrier protein ThiS, forming ThiS-thiocarboxylate. This is a step in the synthesis of thiazole, in the thiamine biosynthesis pathway. The sulfur is donated as persulfide by IscS. This is Probable tRNA sulfurtransferase from Clostridium perfringens (strain 13 / Type A).